The sequence spans 349 residues: 4-hydroxy-tetrahydrodipicolinate reductase 2, chloroplastic (349 aa).

A chloroplast-targeting transit peptide spans 1 to 53; sequence MAANGLMAASSVFLHRPVHPHFSFSSRTNQMVPLGFKGRVSFIGNVKRCFPVV. Residues 81-86, 173-175, and 196-199 contribute to the NAD(+) site; these read GCSGKM, GTT, and SPQM. The active-site Proton donor/acceptor is histidine 232. The active-site Proton donor is lysine 236. 241-242 serves as a coordination point for (S)-2,3,4,5-tetrahydrodipicolinate; sequence GT.

Belongs to the DapB family.

The protein localises to the plastid. The protein resides in the chloroplast. The catalysed reaction is (S)-2,3,4,5-tetrahydrodipicolinate + NAD(+) + H2O = (2S,4S)-4-hydroxy-2,3,4,5-tetrahydrodipicolinate + NADH + H(+). It catalyses the reaction (S)-2,3,4,5-tetrahydrodipicolinate + NADP(+) + H2O = (2S,4S)-4-hydroxy-2,3,4,5-tetrahydrodipicolinate + NADPH + H(+). It functions in the pathway amino-acid biosynthesis; L-lysine biosynthesis via DAP pathway; (S)-tetrahydrodipicolinate from L-aspartate: step 4/4. Catalyzes the conversion of 4-hydroxy-tetrahydrodipicolinate (HTPA) to tetrahydrodipicolinate. In Arabidopsis thaliana (Mouse-ear cress), this protein is 4-hydroxy-tetrahydrodipicolinate reductase 2, chloroplastic (DAPB2).